The chain runs to 179 residues: Large ribosomal subunit protein uL6 (179 aa).

This sequence belongs to the universal ribosomal protein uL6 family. As to quaternary structure, part of the 50S ribosomal subunit.

Its function is as follows. This protein binds to the 23S rRNA, and is important in its secondary structure. It is located near the subunit interface in the base of the L7/L12 stalk, and near the tRNA binding site of the peptidyltransferase center. This chain is Large ribosomal subunit protein uL6, found in Bacillus velezensis (strain DSM 23117 / BGSC 10A6 / LMG 26770 / FZB42) (Bacillus amyloliquefaciens subsp. plantarum).